A 335-amino-acid chain; its full sequence is Solute-binding protein Veis_3954 (335 aa).

The N-terminal stretch at 1 to 34 (MPSTRPLPRPSSRSLRRLALGLGLAFGLGATAAA) is a signal peptide. (R)-pantoate contacts are provided by residues Q50, E82, 155–158 (NGFR), R179, and N219.

Belongs to the bacterial solute-binding protein 7 family. The complex is comprised of an extracytoplasmic solute-binding protein and a heteromeric permease formed by two transmembrane proteins.

It is found in the periplasm. In terms of biological role, solute-binding protein that binds (R)-pantoate and D-erythronate (in vitro). Probably part of a tripartite ATP-independent periplasmic (TRAP) transport system that mediates solute transport into the cytoplasm. In Verminephrobacter eiseniae (strain EF01-2), this protein is Solute-binding protein Veis_3954.